The primary structure comprises 155 residues: Ribosomal RNA large subunit methyltransferase H (155 aa).

Residues G104 and 123–128 (LSRLTL) each bind S-adenosyl-L-methionine.

This sequence belongs to the RNA methyltransferase RlmH family. In terms of assembly, homodimer.

The protein localises to the cytoplasm. It catalyses the reaction pseudouridine(1915) in 23S rRNA + S-adenosyl-L-methionine = N(3)-methylpseudouridine(1915) in 23S rRNA + S-adenosyl-L-homocysteine + H(+). Functionally, specifically methylates the pseudouridine at position 1915 (m3Psi1915) in 23S rRNA. This Marinomonas sp. (strain MWYL1) protein is Ribosomal RNA large subunit methyltransferase H.